A 396-amino-acid polypeptide reads, in one-letter code: Inositol polyphosphate 1-phosphatase (396 aa).

D54 is a binding site for Li(+). E79 contacts Mg(2+). E80 contributes to the Li(+) binding site. Residues D153 and I155 each contribute to the Mg(2+) site. 1D-myo-inositol 1,4-bisphosphate-binding residues include D156, S157, T158, S264, K266, G286, A287, K290, and T308. D313 lines the Mg(2+) pocket. Phosphoserine is present on S314.

This sequence belongs to the inositol monophosphatase superfamily. In terms of assembly, monomer. Requires Mg(2+) as cofactor.

It carries out the reaction 1D-myo-inositol 1,4-bisphosphate + H2O = 1D-myo-inositol 4-phosphate + phosphate. The enzyme catalyses 1D-myo-inositol 1,3,4-trisphosphate + H2O = 1D-myo-inositol 3,4-bisphosphate + phosphate. It participates in signal transduction; phosphatidylinositol signaling pathway. With respect to regulation, inhibited by Li(+). Mg(2+)-dependent phosphatase that catalyzes the hydrolysis of the 1-position phosphate from inositol 1,4-bisphosphate and inositol 1,3,4-trisphosphate and participates in inositol phosphate metabolism. In Mus musculus (Mouse), this protein is Inositol polyphosphate 1-phosphatase.